A 390-amino-acid polypeptide reads, in one-letter code: Aspergillopepsin-1 (390 aa).

The N-terminal stretch at 1 to 19 (MVNTSLLAALTAYAVAVSA) is a signal peptide. Positions 20 to 67 (APTAPQVKGFSVNQVAVPKGVYRHPAAQLAKAYGKYHATVPTQVAAAA) are cleaved as a propeptide — activation peptide. O-linked (Man...) threonine glycosylation is present at Thr-70. Positions 84–387 (YITQVTVGDD…DASGPRLGFA (304 aa)) constitute a Peptidase A1 domain. Residues Asp-100 and Asp-281 contribute to the active site.

Belongs to the peptidase A1 family.

The protein localises to the secreted. It carries out the reaction Hydrolysis of proteins with broad specificity. Generally favors hydrophobic residues in P1 and P1', but also accepts Lys in P1, which leads to activation of trypsinogen. Does not clot milk.. Inhibited by the microbial peptide pepstatin. Its function is as follows. Secreted aspartic endopeptidase that allows assimilation of proteinaceous substrates. The scissile peptide bond is attacked by a nucleophilic water molecule activated by two aspartic residues in the active site. Shows a broad primary substrate specificity. Favors hydrophobic residues at the P1 and P1' positions, but also accepts a lysine residue in the P1 position, leading to the activation of trypsinogen and chymotrypsinogen A. The chain is Aspergillopepsin-1 (pepA) from Aspergillus oryzae (Yellow koji mold).